A 325-amino-acid polypeptide reads, in one-letter code: MVAELEFEKPLVELRRKIQELKEFMKTADVDLSSEIEKLEARLTKLENEVYANLTPWDRVQIARHPQRPTTLDYIERLFTNFFECHGDRCFGDDEAIVGGIADYDGLPVTVIGHQRGKDTKENLRRNFGMPHPEGYRKALRLMKQAEKFSRPIICFIDTKGAYPGKAAEERGQSEAIARNLFEMAGLTVPVVCIVIGEGGSGGALALGVGNHIHMLENSTYSVISPEGAAAILWKDASLAQRAAETMKITAHDLKTLGVIDEIIPEVKGGAHRNADEQAKEIDRVLRASLKQLLALDGEALVEQRYEKFKQMGQVSFLQETIRAR.

The 258-residue stretch at 35–292 folds into the CoA carboxyltransferase C-terminal domain; that stretch reads EIEKLEARLT…DRVLRASLKQ (258 aa).

It belongs to the AccA family. Acetyl-CoA carboxylase is a heterohexamer composed of biotin carboxyl carrier protein (AccB), biotin carboxylase (AccC) and two subunits each of ACCase subunit alpha (AccA) and ACCase subunit beta (AccD).

The protein resides in the cytoplasm. It carries out the reaction N(6)-carboxybiotinyl-L-lysyl-[protein] + acetyl-CoA = N(6)-biotinyl-L-lysyl-[protein] + malonyl-CoA. The protein operates within lipid metabolism; malonyl-CoA biosynthesis; malonyl-CoA from acetyl-CoA: step 1/1. Functionally, component of the acetyl coenzyme A carboxylase (ACC) complex. First, biotin carboxylase catalyzes the carboxylation of biotin on its carrier protein (BCCP) and then the CO(2) group is transferred by the carboxyltransferase to acetyl-CoA to form malonyl-CoA. This chain is Acetyl-coenzyme A carboxylase carboxyl transferase subunit alpha, found in Geobacillus thermodenitrificans (strain NG80-2).